A 112-amino-acid chain; its full sequence is Cytochrome c-551 (112 aa).

The N-terminal stretch at 1 to 20 (MKSKLSILMIGFALSVLLAA) is a signal peptide. The N-palmitoyl cysteine moiety is linked to residue Cys-21. Cys-21 carries the S-diacylglycerol cysteine lipid modification. Residues 25 to 35 (DAKEEKTDTGS) are compositionally biased toward basic and acidic residues. The tract at residues 25–44 (DAKEEKTDTGSKTEATASEG) is disordered. The region spanning 39–112 (ATASEGEELY…VIAKWLSEKK (74 aa)) is the Cytochrome c domain. 4 residues coordinate heme c: Cys-52, Cys-55, His-56, and Met-91.

Post-translationally, binds 1 heme c group covalently per subunit.

Its subcellular location is the cell membrane. In terms of biological role, electron carrier protein. The sequence is that of Cytochrome c-551 (cccB) from Bacillus subtilis (strain 168).